The primary structure comprises 338 residues: tRNA N6-adenosine threonylcarbamoyltransferase (338 aa).

Fe cation contacts are provided by histidine 110 and histidine 114. Residues 132 to 136 (VLSGG), aspartate 165, glycine 178, and asparagine 274 contribute to the substrate site. Fe cation is bound at residue aspartate 298.

It belongs to the KAE1 / TsaD family. Fe(2+) serves as cofactor.

The protein localises to the cytoplasm. The catalysed reaction is L-threonylcarbamoyladenylate + adenosine(37) in tRNA = N(6)-L-threonylcarbamoyladenosine(37) in tRNA + AMP + H(+). Required for the formation of a threonylcarbamoyl group on adenosine at position 37 (t(6)A37) in tRNAs that read codons beginning with adenine. Is involved in the transfer of the threonylcarbamoyl moiety of threonylcarbamoyl-AMP (TC-AMP) to the N6 group of A37, together with TsaE and TsaB. TsaD likely plays a direct catalytic role in this reaction. This chain is tRNA N6-adenosine threonylcarbamoyltransferase, found in Borrelia duttonii (strain Ly).